A 101-amino-acid polypeptide reads, in one-letter code: Large ribosomal subunit protein bL28 (101 aa).

This sequence belongs to the bacterial ribosomal protein bL28 family.

In Rhodopseudomonas palustris (strain BisA53), this protein is Large ribosomal subunit protein bL28.